Reading from the N-terminus, the 213-residue chain is Endonuclease III (213 aa).

Positions 108 to 127 (FKELIKLPGVGRKTANVVLN) constitute a HhH domain. [4Fe-4S] cluster is bound by residues C187, C194, C197, and C203.

The protein belongs to the Nth/MutY family. [4Fe-4S] cluster serves as cofactor.

It carries out the reaction 2'-deoxyribonucleotide-(2'-deoxyribose 5'-phosphate)-2'-deoxyribonucleotide-DNA = a 3'-end 2'-deoxyribonucleotide-(2,3-dehydro-2,3-deoxyribose 5'-phosphate)-DNA + a 5'-end 5'-phospho-2'-deoxyribonucleoside-DNA + H(+). Its function is as follows. DNA repair enzyme that has both DNA N-glycosylase activity and AP-lyase activity. The DNA N-glycosylase activity releases various damaged pyrimidines from DNA by cleaving the N-glycosidic bond, leaving an AP (apurinic/apyrimidinic) site. The AP-lyase activity cleaves the phosphodiester bond 3' to the AP site by a beta-elimination, leaving a 3'-terminal unsaturated sugar and a product with a terminal 5'-phosphate. The protein is Endonuclease III of Rickettsia felis (strain ATCC VR-1525 / URRWXCal2) (Rickettsia azadi).